We begin with the raw amino-acid sequence, 533 residues long: Probable RNA-binding protein 46 (533 aa).

RRM domains lie at 61–139 (CEVF…VSLD), 141–223 (CRLF…WADP), and 236–308 (KVLY…LAKP). Residues 338–362 (ESHSKSLGKPPTLPTRLNGQHSPSP) are disordered.

In terms of assembly, interacts with YTHDC2, MEIOC, MOV10, CNOT6L, DDX4, UPF1 and PABPC1. Expressed in the testis and ovary (at protein level). Expressed in spermatogonia and spermatocytes in testis (at protein level).

The protein localises to the cytoplasm. Essential for male and female fertility, playing a crucial role in regulating germ cell development by ensuring the proper progression of meiosis prophase I. Regulates mitotic-to-meiotic transition in spermatogenesis by forming a complex with MEIOC and YTHDC2 which recognizes and down-regulates mitotic transcripts for a successful meiotic entry. Required for normal synaptonemal complex formation during meiosis, binding meiotic cohesin subunit mRNAs containing GCCUAU/GUUCGA motifs in their 3'UTRs regions and positively regulating their translation. Required for spermatogonial differentiation in both developing and adult testis. The sequence is that of Probable RNA-binding protein 46 from Mus musculus (Mouse).